Consider the following 94-residue polypeptide: Large ribosomal subunit protein bL25 (94 aa).

It belongs to the bacterial ribosomal protein bL25 family. As to quaternary structure, part of the 50S ribosomal subunit; part of the 5S rRNA/L5/L18/L25 subcomplex. Contacts the 5S rRNA. Binds to the 5S rRNA independently of L5 and L18.

This is one of the proteins that binds to the 5S RNA in the ribosome where it forms part of the central protuberance. This chain is Large ribosomal subunit protein bL25, found in Pectobacterium carotovorum subsp. carotovorum (strain PC1).